Reading from the N-terminus, the 125-residue chain is Large ribosomal subunit protein bL12 (125 aa).

The protein belongs to the bacterial ribosomal protein bL12 family. In terms of assembly, homodimer. Part of the ribosomal stalk of the 50S ribosomal subunit. Forms a multimeric L10(L12)X complex, where L10 forms an elongated spine to which 2 to 4 L12 dimers bind in a sequential fashion. Binds GTP-bound translation factors.

Forms part of the ribosomal stalk which helps the ribosome interact with GTP-bound translation factors. Is thus essential for accurate translation. The chain is Large ribosomal subunit protein bL12 from Francisella tularensis subsp. novicida (strain U112).